Consider the following 189-residue polypeptide: Streptothricin acetyltransferase (189 aa).

Positions 44–189 (FALREVPADP…HALYMSMPCP (146 aa)) constitute an N-acetyltransferase domain. The disordered stretch occupies residues 55-76 (LVKVFPDDGGSDGEDGAEGEDA). Residues 63–75 (GGSDGEDGAEGED) are compositionally biased toward acidic residues.

This sequence belongs to the acetyltransferase family. GNAT subfamily.

It catalyses the reaction streptothricin F + acetyl-CoA = N(beta)-acetylstreptothricin F + CoA + H(+). Functionally, involved in resistance to streptothricin, a broad-spectrum antibiotic produced by streptomycetes. Detoxifies streptothricin via acetylation of the beta amino group of the first beta-lysyl moiety of streptothricin. This is Streptothricin acetyltransferase from Streptomyces lavendulae.